We begin with the raw amino-acid sequence, 102 residues long: Small ribosomal subunit protein uS10 (102 aa).

It belongs to the universal ribosomal protein uS10 family. As to quaternary structure, part of the 30S ribosomal subunit.

In terms of biological role, involved in the binding of tRNA to the ribosomes. The protein is Small ribosomal subunit protein uS10 of Exiguobacterium sp. (strain ATCC BAA-1283 / AT1b).